Here is a 236-residue protein sequence, read N- to C-terminus: Potassium/proton antiporter CemA (236 aa).

4 consecutive transmembrane segments (helical) span residues 12-32 (TVTSIKYFISFILFVLITNHV), 114-134 (IANVFADLLSLCIFVLALLLG), 161-181 (IILFTDIFVGFHSSHGWEILI), and 196-216 (FIFLFVATFPVVLDTVFKYWI).

It belongs to the CemA family.

It localises to the plastid. The protein localises to the chloroplast inner membrane. The enzyme catalyses K(+)(in) + H(+)(out) = K(+)(out) + H(+)(in). Contributes to K(+)/H(+) antiport activity by supporting proton efflux to control proton extrusion and homeostasis in chloroplasts in a light-dependent manner to modulate photosynthesis. Prevents excessive induction of non-photochemical quenching (NPQ) under continuous-light conditions. Indirectly promotes efficient inorganic carbon uptake into chloroplasts. The polypeptide is Potassium/proton antiporter CemA (Chlorokybus atmophyticus (Soil alga)).